Here is a 333-residue protein sequence, read N- to C-terminus: Protein FAM170A (333 aa).

Disordered regions lie at residues 1-45 (MKRR…GVGE), 73-107 (LQDS…PSYK), and 143-214 (ETSE…AKTP). Positions 10-29 (LEIEESKEAGISKSQEDISH) are enriched in basic and acidic residues. The segment covering 92–105 (TTAPSQQASSSCPS) has biased composition (low complexity). Positions 143 to 156 (ETSESLEKQPRMEE) are enriched in basic and acidic residues. Residues 170–179 (SDVSTRNLLS) are compositionally biased toward polar residues. The span at 185-196 (GEEKEHEEKPES) shows a compositional bias: basic and acidic residues. Thr213 is subject to Phosphothreonine. The C2H2-type; degenerate zinc finger occupies 224-248 (FRCMACCRVFATMESLQEHVQYGIR). The tract at residues 267 to 333 (MESESTQEEE…RKDHCDNSGS (67 aa)) is disordered. Residues 271 to 281 (STQEEEEDHTE) are compositionally biased toward acidic residues. Basic and acidic residues predominate over residues 282–293 (ETEKPKEEKAEE). Ser308 is subject to Phosphoserine.

It belongs to the FAM170 family. As to expression, testis-specific.

The protein localises to the nucleus. Acts as a nuclear transcription factor that positively regulates the expression of heat shock genes. Binds to heat shock promoter elements (HSE). The protein is Protein FAM170A (Fam170a) of Mus musculus (Mouse).